Consider the following 434-residue polypeptide: Protein maelstrom homolog (434 aa).

The segment at residues 4–73 (RRGSRNAYYF…AQGKDAGPWE (70 aa)) is a DNA-binding region (HMG box). Residues 357–387 (SHFSSSNQEQRSNTPTGDYPSGVKISGQSSS) form a disordered region. Polar residues predominate over residues 363-372 (NQEQRSNTPT).

It belongs to the maelstrom family. Interacts with SMARCB1, SIN3B and DDX4. Interacts with piRNA-associated proteins TDRD1, PIWIL1 and PIWIL2. Interacts with TEX19.

Its subcellular location is the cytoplasm. It localises to the nucleus. Functionally, plays a central role during spermatogenesis by repressing transposable elements and preventing their mobilization, which is essential for the germline integrity. Acts via the piRNA metabolic process, which mediates the repression of transposable elements during meiosis by forming complexes composed of piRNAs and Piwi proteins and governs the methylation and subsequent repression of transposons. Its association with piP-bodies suggests a participation in the secondary piRNAs metabolic process. Required for the localization of germ-cell factors to the meiotic nuage. The protein is Protein maelstrom homolog (MAEL) of Sus scrofa (Pig).